Here is a 66-residue protein sequence, read N- to C-terminus: Large ribosomal subunit protein bL33c (66 aa).

Belongs to the bacterial ribosomal protein bL33 family.

It is found in the plastid. The protein resides in the chloroplast. The sequence is that of Large ribosomal subunit protein bL33c from Platanus occidentalis (Sycamore).